Reading from the N-terminus, the 294-residue chain is S-adenosylmethionine uptake transporter (294 aa).

Helical transmembrane passes span 8–28 (YLTG…NDVI), 41–61 (VAFF…VYYG), 74–91 (ILRG…TYGL), 98–118 (TATV…VFFL), 121–141 (NIIW…VVTL), 148–168 (FNPE…LDII), 177–197 (SMIS…LPVA), 207–227 (FELA…FFLL), 237–257 (ATAP…YFIF), and 260–280 (FPDK…LFII). 2 EamA domains span residues 21–141 (SSSA…VVTL) and 160–280 (ISFA…LFII).

The protein belongs to the drug/metabolite transporter (DMT) superfamily. 10 TMS drug/metabolite exporter (DME) (TC 2.A.7.3) family.

The protein localises to the cell inner membrane. Its function is as follows. Transports S-adenosylmethionine. This Rickettsia conorii (strain ATCC VR-613 / Malish 7) protein is S-adenosylmethionine uptake transporter (sam).